The sequence spans 119 residues: Ribonuclease P protein component (119 aa).

The protein belongs to the RnpA family. Consists of a catalytic RNA component (M1 or rnpB) and a protein subunit.

The enzyme catalyses Endonucleolytic cleavage of RNA, removing 5'-extranucleotides from tRNA precursor.. In terms of biological role, RNaseP catalyzes the removal of the 5'-leader sequence from pre-tRNA to produce the mature 5'-terminus. It can also cleave other RNA substrates such as 4.5S RNA. The protein component plays an auxiliary but essential role in vivo by binding to the 5'-leader sequence and broadening the substrate specificity of the ribozyme. The chain is Ribonuclease P protein component from Yersinia enterocolitica serotype O:8 / biotype 1B (strain NCTC 13174 / 8081).